Here is a 708-residue protein sequence, read N- to C-terminus: Polyribonucleotide nucleotidyltransferase (708 aa).

Mg(2+)-binding residues include D486 and D492. Residues 553-612 form the KH domain; that stretch reads PRITTIKVPPQKVREVIGSGGKVIREITEVTGTKIDIEDDGTIKIASADAEATQRAVDWI. The region spanning 622–690 is the S1 motif domain; that stretch reads GVVYTGKVVK…DRGKIKLSMK (69 aa).

Belongs to the polyribonucleotide nucleotidyltransferase family. Requires Mg(2+) as cofactor.

The protein resides in the cytoplasm. The enzyme catalyses RNA(n+1) + phosphate = RNA(n) + a ribonucleoside 5'-diphosphate. Its function is as follows. Involved in mRNA degradation. Catalyzes the phosphorolysis of single-stranded polyribonucleotides processively in the 3'- to 5'-direction. The protein is Polyribonucleotide nucleotidyltransferase of Rhodospirillum rubrum (strain ATCC 11170 / ATH 1.1.1 / DSM 467 / LMG 4362 / NCIMB 8255 / S1).